A 174-amino-acid polypeptide reads, in one-letter code: Transcription factor bHLH168 (174 aa).

Positions 14–63 (SLREQRNLREKERRMRMKHLFSILSSHVSPTRRLPVPQLIDQAVSYMIQL) constitute a bHLH domain.

It belongs to the bHLH protein family.

Its subcellular location is the nucleus. The chain is Transcription factor bHLH168 from Arabidopsis thaliana (Mouse-ear cress).